A 57-amino-acid polypeptide reads, in one-letter code: Cytochrome b-c1 complex subunit 10, mitochondrial (57 aa).

Topologically, residues 1-23 (MAGTSGLLNAVKPKIQTIDIQAA) are mitochondrial matrix. A helical transmembrane segment spans residues 24 to 44 (AGWGIAAAAGAIWVVQPFGWI). The Mitochondrial intermembrane segment spans residues 45 to 57 (KKTFIDPPPTEEK).

Belongs to the UQCR11/QCR10 family. In terms of assembly, component of the ubiquinol-cytochrome c oxidoreductase (cytochrome b-c1 complex, complex III, CIII), a multisubunit enzyme composed of 10 subunits. The complex is composed of 3 respiratory subunits cytochrome b (MT-CYB), cytochrome c1 (CYC1-1 or CYC1-2) and Rieske protein (UCR1-1 or UCR1-2), 2 core protein subunits MPPalpha1 (or MPPalpha2) and MPPB, and 5 low-molecular weight protein subunits QCR7-1 (or QCR7-2), UCRQ-1 (or UCRQ-2), QCR9, UCRY and probably QCR6-1 (or QCR6-2). The complex exists as an obligatory dimer and forms supercomplexes (SCs) in the inner mitochondrial membrane with NADH-ubiquinone oxidoreductase (complex I, CI), resulting in different assemblies (supercomplexes SCI(1)III(2) and SCI(2)III(4)).

The protein resides in the mitochondrion inner membrane. Functionally, component of the ubiquinol-cytochrome c oxidoreductase, a multisubunit transmembrane complex that is part of the mitochondrial electron transport chain which drives oxidative phosphorylation. The respiratory chain contains 3 multisubunit complexes succinate dehydrogenase (complex II, CII), ubiquinol-cytochrome c oxidoreductase (cytochrome b-c1 complex, complex III, CIII) and cytochrome c oxidase (complex IV, CIV), that cooperate to transfer electrons derived from NADH and succinate to molecular oxygen, creating an electrochemical gradient over the inner membrane that drives transmembrane transport and the ATP synthase. The cytochrome b-c1 complex catalyzes electron transfer from ubiquinol to cytochrome c, linking this redox reaction to translocation of protons across the mitochondrial inner membrane, with protons being carried across the membrane as hydrogens on the quinol. In the process called Q cycle, 2 protons are consumed from the matrix, 4 protons are released into the intermembrane space and 2 electrons are passed to cytochrome c. This Arabidopsis thaliana (Mouse-ear cress) protein is Cytochrome b-c1 complex subunit 10, mitochondrial (UCRY).